Consider the following 1358-residue polypeptide: Phosphoinositide 3-kinase regulatory subunit 4 (1358 aa).

The N-myristoyl glycine moiety is linked to residue G2. The Protein kinase domain maps to 26–324 (FEYDKSLGST…AFPEIFYTFL (299 aa)). ATP-binding positions include 32-40 (LGSTRFFKV) and K53. The Proton acceptor role is filled by D148. 7 HEAT repeats span residues 373–411 (NGLVILVSVITSCLQTLKYYDSKLAALELILHLAPRLGV), 413–450 (ILLDRITPYLLHFSNDSVPRVRAEALRTLTKVLALVKE), 458–495 (IYPEYILPGIAHLAQDDATIVRLAYAENIALLAETALR), 531–570 (QALHEMVQQKVVTLLSDPENIVKQTLMENGITRLCVFFGR), 572–610 (KANDVLLSHMITFLNDKNDWHLRGAFFDSIVGVAAYVGW), 612–648 (SSSILKPLLQQGLSDAEEFVIVKALYALTCMCQLGLL), and 690–726 (DVYCKLMPYLDPYITQPIIQIERKLVLLSVLKEPVSR). Residues S808, S813, S853, and S865 each carry the phosphoserine modification. Residues 875–899 (LPKGSDQEVIQTGKPPRSESSAGIC) are disordered. WD repeat units lie at residues 991–1030 (EHKSAVNRIRVSDEHSLFATCSNDGTVKIRNSQKMEGKTT), 1040–1079 (RVGGRVKTLTFCQGSHYLAIASDNGAVQLLGIEASKLPKS), 1093–1134 (KEDG…NAWT), 1139–1178 (LKSGLITSFAVDIHQCWLCIGTSSGTMACWDMRFQLPISS), 1182–1223 (PSRA…RRFT), and 1237–1278 (PSPH…RSYV). The disordered stretch occupies residues 1307 to 1326 (KQKVGPSDDTPRRGPESLPV). The segment covering 1315–1326 (DTPRRGPESLPV) has biased composition (basic and acidic residues). T1316 is modified (phosphothreonine). A WD 7 repeat occupies 1327-1358 (GHHDIITDVATFQTTQGFIVTASRDGIVKVWK).

This sequence belongs to the protein kinase superfamily. Ser/Thr protein kinase family. In terms of assembly, component of the PI3K (PI3KC3/PI3K-III/class III phosphatidylinositol 3-kinase) complex the core of which is composed of the catalytic subunit PIK3C3, the regulatory subunit PIK3R4 and BECN1 associating with additional regulatory/auxiliary subunits to form alternative complex forms. Alternative complex forms containing a fourth regulatory subunit in a mutually exclusive manner are PI3K complex I (PI3KC3-C1) containing ATG14, and PI3K complex II (PI3KC3-C2) containing UVRAG. PI3KC3-C1 displays a V-shaped architecture with PIK3R4 serving as a bridge between PIK3C3 and the ATG14:BECN1 subcomplex. Both, PI3KC3-C1 and PI3KC3-C2, can associate with further regulatory subunits, such as RUBCN, SH3GLB1/Bif-1, AMBRA1 and NRBF2. PI3KC3-C1 probably associates with PIK3CB. Interacts with RAB7A in the presence of PIK3C3/VPS34. Interacts with NRBF2. Interacts with ARMC3. It depends on Mn(2+) as a cofactor. Post-translationally, myristoylated. Probably autophosphorylated.

It is found in the late endosome. The protein resides in the cytoplasmic vesicle. It localises to the autophagosome. Its subcellular location is the membrane. The enzyme catalyses L-seryl-[protein] + ATP = O-phospho-L-seryl-[protein] + ADP + H(+). It catalyses the reaction L-threonyl-[protein] + ATP = O-phospho-L-threonyl-[protein] + ADP + H(+). In terms of biological role, regulatory subunit of the PI3K complex that mediates formation of phosphatidylinositol 3-phosphate; different complex forms are believed to play a role in multiple membrane trafficking pathways: PI3KC3-C1 is involved in initiation of autophagosomes and PI3KC3-C2 in maturation of autophagosomes and endocytosis. Involved in regulation of degradative endocytic trafficking and cytokinesis, probably in the context of PI3KC3-C2. Its function is as follows. Regulatory subunit of the PI3K complex. May regulate membrane trafficking late in the endocytic pathway. The protein is Phosphoinositide 3-kinase regulatory subunit 4 (PIK3R4) of Pongo abelii (Sumatran orangutan).